The chain runs to 716 residues: Polyribonucleotide nucleotidyltransferase (716 aa).

Positions 493 and 499 each coordinate Mg(2+). The KH domain maps to Pro560–Ile619. Residues Gly629–Lys697 enclose the S1 motif domain.

Belongs to the polyribonucleotide nucleotidyltransferase family. Mg(2+) serves as cofactor.

It localises to the cytoplasm. The catalysed reaction is RNA(n+1) + phosphate = RNA(n) + a ribonucleoside 5'-diphosphate. In terms of biological role, involved in mRNA degradation. Catalyzes the phosphorolysis of single-stranded polyribonucleotides processively in the 3'- to 5'-direction. The sequence is that of Polyribonucleotide nucleotidyltransferase from Paraburkholderia xenovorans (strain LB400).